A 310-amino-acid polypeptide reads, in one-letter code: Small ribosomal subunit protein uS2 (310 aa).

Positions 249–272 (WERDLLEGEKAEKKDDAEAAEKPA) are enriched in basic and acidic residues. The segment at 249 to 310 (WERDLLEGEK…EAPAADAEQA (62 aa)) is disordered. Residues 273–310 (EAPAAEAPAAEAAEAPAAEAAPAEEPAAEAPAADAEQA) show a composition bias toward low complexity.

Belongs to the universal ribosomal protein uS2 family.

This Streptomyces coelicolor (strain ATCC BAA-471 / A3(2) / M145) protein is Small ribosomal subunit protein uS2 (rpsB).